Here is a 98-residue protein sequence, read N- to C-terminus: Small ribosomal subunit protein uS19 (98 aa).

The segment at 77 to 98 (TRTFRGHAGGKAEKGGSAPKRK) is disordered.

This sequence belongs to the universal ribosomal protein uS19 family.

In terms of biological role, protein S19 forms a complex with S13 that binds strongly to the 16S ribosomal RNA. This is Small ribosomal subunit protein uS19 from Chlorobium luteolum (strain DSM 273 / BCRC 81028 / 2530) (Pelodictyon luteolum).